The primary structure comprises 129 residues: Glycine cleavage system H protein (129 aa).

The region spanning 24–106 (VFTVGISEHA…YGDGWLFKIK (83 aa)) is the Lipoyl-binding domain. Lysine 65 bears the N6-lipoyllysine mark.

This sequence belongs to the GcvH family. As to quaternary structure, the glycine cleavage system is composed of four proteins: P, T, L and H. (R)-lipoate serves as cofactor.

In terms of biological role, the glycine cleavage system catalyzes the degradation of glycine. The H protein shuttles the methylamine group of glycine from the P protein to the T protein. This Alteromonas mediterranea (strain DSM 17117 / CIP 110805 / LMG 28347 / Deep ecotype) protein is Glycine cleavage system H protein.